A 298-amino-acid chain; its full sequence is Glutamyl-Q tRNA(Asp) synthetase (298 aa).

L-glutamate is bound by residues 8–12 (RFAPS) and glutamate 44. A 'HIGH' region motif is present at residues 11 to 21 (PSPTGPLHFGS). Residues cysteine 100, cysteine 102, tyrosine 123, and cysteine 127 each coordinate Zn(2+). Tyrosine 183 and arginine 201 together coordinate L-glutamate. The short motif at 239-243 (KLSKQ) is the 'KMSKS' region element. Lysine 242 lines the ATP pocket.

It belongs to the class-I aminoacyl-tRNA synthetase family. GluQ subfamily. Zn(2+) is required as a cofactor.

Functionally, catalyzes the tRNA-independent activation of glutamate in presence of ATP and the subsequent transfer of glutamate onto a tRNA(Asp). Glutamate is transferred on the 2-amino-5-(4,5-dihydroxy-2-cyclopenten-1-yl) moiety of the queuosine in the wobble position of the QUC anticodon. This is Glutamyl-Q tRNA(Asp) synthetase from Burkholderia orbicola (strain AU 1054).